Consider the following 623-residue polypeptide: Mu-like prophage FluMu defective tail fiber protein (623 aa).

This sequence to phage Mu protein S.

The chain is Mu-like prophage FluMu defective tail fiber protein from Haemophilus influenzae (strain ATCC 51907 / DSM 11121 / KW20 / Rd).